The sequence spans 386 residues: Succinate--CoA ligase [ADP-forming] subunit beta (386 aa).

The ATP-grasp domain maps to 9–244 (KAVLRSYGVS…LDEEDSKEIE (236 aa)). Residues Lys46, 53–55 (GRG), Glu99, Cys102, and Glu107 each bind ATP. 2 residues coordinate Mg(2+): Asn199 and Asp213. Substrate-binding positions include Asn264 and 321–323 (GIM).

It belongs to the succinate/malate CoA ligase beta subunit family. Heterotetramer of two alpha and two beta subunits. The cofactor is Mg(2+).

It catalyses the reaction succinate + ATP + CoA = succinyl-CoA + ADP + phosphate. The enzyme catalyses GTP + succinate + CoA = succinyl-CoA + GDP + phosphate. Its pathway is carbohydrate metabolism; tricarboxylic acid cycle; succinate from succinyl-CoA (ligase route): step 1/1. Its function is as follows. Succinyl-CoA synthetase functions in the citric acid cycle (TCA), coupling the hydrolysis of succinyl-CoA to the synthesis of either ATP or GTP and thus represents the only step of substrate-level phosphorylation in the TCA. The beta subunit provides nucleotide specificity of the enzyme and binds the substrate succinate, while the binding sites for coenzyme A and phosphate are found in the alpha subunit. This chain is Succinate--CoA ligase [ADP-forming] subunit beta, found in Bacillus cereus (strain B4264).